The following is a 158-amino-acid chain: uncharacterized protein (158 aa).

Transmembrane regions (helical) follow at residues F42–Y62, W71–A91, L102–L122, and E130–F150.

Its subcellular location is the cell membrane. This is an uncharacterized protein from Bacillus subtilis (strain 168).